A 242-amino-acid chain; its full sequence is Small ribosomal subunit protein uS2 (242 aa).

This sequence belongs to the universal ribosomal protein uS2 family.

This chain is Small ribosomal subunit protein uS2, found in Mannheimia succiniciproducens (strain KCTC 0769BP / MBEL55E).